Here is a 539-residue protein sequence, read N- to C-terminus: Chaperonin GroEL (539 aa).

Residues Thr29–Pro32, Asp86–Thr90, Gly413, Asp479–Leu481, and Asp495 each bind ATP.

Belongs to the chaperonin (HSP60) family. As to quaternary structure, forms a cylinder of 14 subunits composed of two heptameric rings stacked back-to-back. Interacts with the co-chaperonin GroES.

Its subcellular location is the cytoplasm. It carries out the reaction ATP + H2O + a folded polypeptide = ADP + phosphate + an unfolded polypeptide.. Functionally, together with its co-chaperonin GroES, plays an essential role in assisting protein folding. The GroEL-GroES system forms a nano-cage that allows encapsulation of the non-native substrate proteins and provides a physical environment optimized to promote and accelerate protein folding. This is Chaperonin GroEL from Thermosipho africanus (strain TCF52B).